Consider the following 839-residue polypeptide: Enhancer of polycomb-like protein 1 (839 aa).

Disordered regions lie at residues 350–379 (QKKRKVEPKKEEKAEKASTPVRGGKAAGSA), 393–415 (GSGSPSVSSTHVPPNVSIPPSKI), 608–640 (LADRQKYDRETEPTRQMSSYDKDPSQLNGISSD), and 679–839 (QQQQ…KVDA). The span at 608–620 (LADRQKYDRETEP) shows a compositional bias: basic and acidic residues. Polar residues predominate over residues 621 to 640 (TRQMSSYDKDPSQLNGISSD). Low complexity predominate over residues 679–690 (QQQQQQMRNRQQ). Over residues 697-713 (PGAGLGGGQGAGGGAGG) the composition is skewed to gly residues. Over residues 714–730 (SRNNSPAPGTNGPQSKM) the composition is skewed to polar residues. Residues 747–786 (QHQQYQQMQQQQQQQQQQQQQRKMGVAPMNAASAAAAMAA) show a composition bias toward low complexity. A compositionally biased stretch (basic and acidic residues) spans 828–839 (MKQKSELAKVDA).

Belongs to the enhancer of polycomb family. As to quaternary structure, component of the NuA4 histone acetyltransferase complex.

The protein localises to the nucleus. In terms of biological role, component of the NuA4 histone acetyltransferase complex which is involved in transcriptional activation of selected genes principally by acetylation of nucleosomal histone H4 and H2A. The NuA4 complex is also involved in DNA repair. Involved in gene silencing by neighboring heterochromatin, blockage of the silencing spreading along the chromosome, and required for cell cycle progression through G2/M. The sequence is that of Enhancer of polycomb-like protein 1 (EPL1) from Yarrowia lipolytica (strain CLIB 122 / E 150) (Yeast).